We begin with the raw amino-acid sequence, 233 residues long: Glycolipid transfer protein 3 (233 aa).

A ganglioside GM3 (d18:1(4E)) contacts are provided by aspartate 79, asparagine 83, tryptophan 126, and histidine 165.

It belongs to the GLTP family.

Functionally, may be involved in glycolipids transfer. The sequence is that of Glycolipid transfer protein 3 from Arabidopsis thaliana (Mouse-ear cress).